Consider the following 739-residue polypeptide: Putative apoptosis-inducing factor 1, mitochondrial (739 aa).

The transit peptide at 1 to 42 (MSIWGVRCLTQRFIRQAYILANRRLLGPVPQRSPPAYAPLRP) directs the protein to the mitochondrion. The segment at 257-564 (YLIIGGGTAA…ARRNLYVAGD (308 aa)) is FAD-dependent oxidoreductase. Residues 261–265 (GGGTA), Arg295, Lys300, Val358, Arg410, Asp564, and 580–581 (HH) contribute to the FAD site. The interval 644–681 (VDQLSESSDSDVPETSTSSSQSSKSDAGASQDGVTCDP) is disordered. Low complexity predominate over residues 656 to 676 (PETSTSSSQSSKSDAGASQDG).

The protein belongs to the FAD-dependent oxidoreductase family. It depends on FAD as a cofactor.

It localises to the mitochondrion intermembrane space. It catalyses the reaction A + NADH + H(+) = AH2 + NAD(+). In terms of biological role, probable NADH oxidoreductase. Mitochondrial effector of cell death that plays roles in developmentally regulated cell death and normal mitochondrial function. This chain is Putative apoptosis-inducing factor 1, mitochondrial (AIF), found in Drosophila melanogaster (Fruit fly).